An 84-amino-acid chain; its full sequence is Small ribosomal subunit protein uS17 (84 aa).

The protein belongs to the universal ribosomal protein uS17 family. In terms of assembly, part of the 30S ribosomal subunit.

Its function is as follows. One of the primary rRNA binding proteins, it binds specifically to the 5'-end of 16S ribosomal RNA. The polypeptide is Small ribosomal subunit protein uS17 (Photorhabdus laumondii subsp. laumondii (strain DSM 15139 / CIP 105565 / TT01) (Photorhabdus luminescens subsp. laumondii)).